We begin with the raw amino-acid sequence, 678 residues long: Protein distal antenna (678 aa).

Positions 7 to 58 constitute an HTH psq-type domain; sequence TKGKRPLRSLTPRDKIHAIQRIHDGESKASVARDIGVPESTLRGWCKNEDKL. The segment at residues 34 to 54 is a DNA-binding region (H-T-H motif); the sequence is KASVARDIGVPESTLRGWCKN. Disordered stretches follow at residues 232 to 310, 344 to 381, 445 to 528, 541 to 592, and 645 to 678; these read GAGN…GGPM, GVTSPPIRSSTPQHMSQLAQTPPIPSAPLTPSSTPSGS, KETE…TSEC, GMEA…DEEE, and NETPMIEKSALPEDSEEHAAEEEGSGRGKSRRRK. Polar residues-rich tracts occupy residues 241-254 and 349-363; these read PSGQTPLQVQSPRS and PIRSSTPQHMSQLAQ. 2 positions are modified to phosphoserine: Ser-251 and Ser-254. Positions 372–381 are enriched in low complexity; the sequence is LTPSSTPSGS. Over residues 449–461 the composition is skewed to polar residues; that stretch reads TPSVRSLSSNEQN. Over residues 462–478 the composition is skewed to acidic residues; sequence PEADEATETDLDGEVEP. A compositionally biased stretch (polar residues) spans 495 to 508; it reads TPSQSPIAHSSGSR. The segment covering 570 to 586 has biased composition (low complexity); that stretch reads NNNDVSASNNNNNNNSN. A compositionally biased stretch (acidic residues) spans 657–667; sequence EDSEEHAAEEE.

In terms of assembly, homomers. Interacts with itself, danr, ey and dac to form a complex (or complexes) containing the RD factors. Coexpressed with danr in the presumptive distal antenna, but not in the leg imaginal disk. Both proteins are also expressed in the brain and the eye region of the eye-antenna disk. First detected in early L3 eye disks in cells surrounding the newly initiated MF. Levels are uniform and high anterior to the furrow, lower levels within and posterior to the furrow. Limited expression is seen in small groups of cells in leg and wing. These appear in the location of prominent sense organ progenitors at relatively late stages of disk development.

The protein resides in the nucleus. In terms of biological role, probable transcription factor with a role in the retinal determination (RD) network. Regulates ato expression and is required for normal R8 induction and differentiation. Danr appears to repress Dan expression, but Dan is required for Danr expression anterior to the morphogenetic furrow (MF). Dan and Danr lie downstream of so and require dac function for highest levels of expression. Contributes to differentiation of antenna-specific characteristics; effector gene that acts downstream of homothorax (hth), Distal-less (Dll), cut (ct) and spineless (ss) genes to control differentiation of distal antennal structures. This Drosophila melanogaster (Fruit fly) protein is Protein distal antenna.